Consider the following 282-residue polypeptide: Acetylglutamate kinase (282 aa).

Substrate-binding positions include 62–63, Arg-84, and Asn-178; that span reads GG.

It belongs to the acetylglutamate kinase family. ArgB subfamily.

It localises to the cytoplasm. The catalysed reaction is N-acetyl-L-glutamate + ATP = N-acetyl-L-glutamyl 5-phosphate + ADP. It participates in amino-acid biosynthesis; L-arginine biosynthesis; N(2)-acetyl-L-ornithine from L-glutamate: step 2/4. Catalyzes the ATP-dependent phosphorylation of N-acetyl-L-glutamate. The chain is Acetylglutamate kinase from Thermotoga neapolitana (strain ATCC 49049 / DSM 4359 / NBRC 107923 / NS-E).